A 129-amino-acid polypeptide reads, in one-letter code: Small ribosomal subunit protein uS11 (129 aa).

The protein belongs to the universal ribosomal protein uS11 family. Part of the 30S ribosomal subunit. Interacts with proteins S7 and S18. Binds to IF-3.

Located on the platform of the 30S subunit, it bridges several disparate RNA helices of the 16S rRNA. Forms part of the Shine-Dalgarno cleft in the 70S ribosome. The protein is Small ribosomal subunit protein uS11 of Caulobacter vibrioides (strain ATCC 19089 / CIP 103742 / CB 15) (Caulobacter crescentus).